A 354-amino-acid polypeptide reads, in one-letter code: Uroporphyrinogen decarboxylase (354 aa).

Substrate-binding positions include 27–31 (RQAGR), Phe46, Asp77, Tyr153, Thr208, and His326.

It belongs to the uroporphyrinogen decarboxylase family. Homodimer.

The protein localises to the cytoplasm. It catalyses the reaction uroporphyrinogen III + 4 H(+) = coproporphyrinogen III + 4 CO2. It functions in the pathway porphyrin-containing compound metabolism; protoporphyrin-IX biosynthesis; coproporphyrinogen-III from 5-aminolevulinate: step 4/4. In terms of biological role, catalyzes the decarboxylation of four acetate groups of uroporphyrinogen-III to yield coproporphyrinogen-III. The polypeptide is Uroporphyrinogen decarboxylase (Neisseria meningitidis serogroup A / serotype 4A (strain DSM 15465 / Z2491)).